Consider the following 154-residue polypeptide: Deoxyuridine 5'-triphosphate nucleotidohydrolase (154 aa).

Residues 64-66 (RSG), asparagine 77, 81-83 (TID), and lysine 91 each bind substrate.

Belongs to the dUTPase family. Homotrimer. The cofactor is Mg(2+).

It carries out the reaction dUTP + H2O = dUMP + diphosphate + H(+). It participates in pyrimidine metabolism; dUMP biosynthesis; dUMP from dCTP (dUTP route): step 2/2. Functionally, this enzyme is involved in nucleotide metabolism: it produces dUMP, the immediate precursor of thymidine nucleotides and it decreases the intracellular concentration of dUTP so that uracil cannot be incorporated into DNA. The chain is Deoxyuridine 5'-triphosphate nucleotidohydrolase from Mycobacterium marinum (strain ATCC BAA-535 / M).